Consider the following 495-residue polypeptide: Acyltransferase abl6 (495 aa).

H171 functions as the Proton acceptor in the catalytic mechanism.

The protein belongs to the plant acyltransferase family.

Functionally, acyltransferase; part of the gene cluster that mediates the biosynthesis of abscisic acid (ABA), a phytohormone that acts antagonistically toward salicylic acid (SA), jasmonic acid (JA) and ethylene (ETH) signaling, to impede plant defense responses. The first step of the pathway catalyzes the reaction from farnesyl diphosphate to alpha-ionylideneethane performed by the alpha-ionylideneethane synthase abl3 via a three-step reaction mechanism involving 2 neutral intermediates, beta-farnesene and allofarnesene. The cytochrome P450 monooxygenase abl1 might then be involved in the conversion of alpha-ionylideneethane to alpha-ionylideneacetic acid. Alpha-ionylideneacetic acid is further converted to abscisic acid in 2 steps involving the cytochrome P450 monooxygenase abl2 and the short-chain dehydrogenase/reductase abl4, via the intermediates 1'-deoxy-ABA or 1',4'-trans-diol-ABA, depending on the order of action of these 2 enzymes. Abl2 is responsible for the hydroxylation of carbon atom C-1' and abl4 might be involved in the oxidation of the C-4' carbon atom. The acyltransferase abl6 seems not essential for the biosynthesis of ABA, but it may acetylate ABA as part of the synthesis of another ABA-related molecule. The protein is Acyltransferase abl6 of Leptosphaeria maculans (strain JN3 / isolate v23.1.3 / race Av1-4-5-6-7-8) (Blackleg fungus).